An 877-amino-acid chain; its full sequence is Neurotrypsin (877 aa).

An N-terminal signal peptide occupies residues 1–20; it reads MTLARFVLALVLGALPEVVS. The N-linked (GlcNAc...) asparagine glycan is linked to Asn26. The interval 31 to 90 is disordered; the sequence is HRHRHRHSPPPGLQYPYYLPTQQRPPRTRPPPPLPRFPRPPRALPAQRPHALQAGHTPRP. Positions 44 to 55 are enriched in low complexity; sequence QYPYYLPTQQRP. Positions 58-73 are enriched in pro residues; that stretch reads TRPPPPLPRFPRPPRA. The Kringle domain maps to 95-167; the sequence is CPAGEPWVSV…GKVDWGYCDC (73 aa). 20 disulfide bridges follow: Cys95–Cys167, Cys111–Cys151, Cys140–Cys165, Cys197–Cys261, Cys210–Cys271, Cys241–Cys251, Cys307–Cys371, Cys320–Cys381, Cys351–Cys361, Cys414–Cys477, Cys427–Cys487, Cys457–Cys467, Cys527–Cys591, Cys540–Cys601, Cys571–Cys581, Cys621–Cys752, Cys663–Cys679, Cys767–Cys833, Cys796–Cys810, and Cys823–Cys852. 4 consecutive SRCR domains span residues 172–273, 282–383, 389–489, and 502–603; these read VRLR…TCSF, IRLV…SCTP, IRLA…ACYP, and VRLM…ICDY. The interval 621–632 is zymogen activation region; it reads CGLRLLHRRQKR. In terms of domain architecture, Peptidase S1 spans 633–876; that stretch reads IIGGKNSLRG…FVPWIKSVTK (244 aa). His678 (charge relay system) is an active-site residue. N-linked (GlcNAc...) asparagine glycosylation is present at Asn685. Asp728 acts as the Charge relay system in catalysis. The active-site Charge relay system is Ser827.

It belongs to the peptidase S1 family.

Its subcellular location is the secreted. Its function is as follows. Plays a role in neuronal plasticity and the proteolytic action may subserve structural reorganizations associated with learning and memory operations. The polypeptide is Neurotrypsin (PRSS12) (Pongo pygmaeus (Bornean orangutan)).